A 234-amino-acid polypeptide reads, in one-letter code: MKIKWLGHSAFHVETAKAKILIDPFFTGNPAFRDGERRAVTAGLTHILLTHGHGDHVGDTVAIAKETGATVLANFDLCMWLGRQGVAKLEPGNTGGTIRLGSFSATFVNALHSSAQITEDGVSHSLGNANGLVLHFDDEPTLYHMGDTDIFSDMALVQELHEPEIGIVPIGDRFTMGGAVAALACQRYFKFATAIPCHYGSFPIIDQTPETFVAGMDGASTLVATPEVGGIVNA.

Belongs to the UPF0173 family.

This is UPF0173 metal-dependent hydrolase Smed_0942 from Sinorhizobium medicae (strain WSM419) (Ensifer medicae).